We begin with the raw amino-acid sequence, 311 residues long: Olfactory receptor 4S2 (311 aa).

The Extracellular segment spans residues 1-23 (MEKINNVTEFIFWGLSQSPEIEK). N-linked (GlcNAc...) asparagine glycosylation occurs at Asn6. The helical transmembrane segment at 24 to 47 (VCFVVFSFFYIIILLGNLLIMLTV) threads the bilayer. Over 48–55 (CLSNLFKS) the chain is Cytoplasmic. A helical transmembrane segment spans residues 56–77 (PMYFFLSFLSFVDICYSSVTAP). The Extracellular portion of the chain corresponds to 78-98 (KMIVDLLAKDKTISYVGCMLQ). Cys95 and Cys187 are disulfide-bonded. A helical transmembrane segment spans residues 99 to 118 (LFGVHFFGCTEIFILTVMAY). The Cytoplasmic portion of the chain corresponds to 119–137 (DRYVAICKPLHYMTIMNRE). Residues 138–156 (TCNKMLLGTWVGGFLHSII) form a helical membrane-spanning segment. Residues 157–193 (QVALVVQLPFCGPNEIDHYFCDVHPVLKLACTETYIV) are Extracellular-facing. A helical membrane pass occupies residues 194–217 (GVVVTANSGTIALGSFVILLISYS). Topologically, residues 218–233 (IILVSLRKQSAEGRRK) are cytoplasmic. Residues 234–256 (ALSTCGSHIAMVVIFFGPCTFMY) traverse the membrane as a helical segment. Residues 257–267 (MRPDTTFSEDK) are Extracellular-facing. Residues 268–287 (MVAVFYTIITPMLNPLIYTL) form a helical membrane-spanning segment. Over 288-311 (RNAEVKNAMKKLWGRNVFLEAKGK) the chain is Cytoplasmic.

This sequence belongs to the G-protein coupled receptor 1 family.

It localises to the cell membrane. Odorant receptor. This chain is Olfactory receptor 4S2 (OR4S2), found in Homo sapiens (Human).